The following is a 156-amino-acid chain: Transcription elongation factor GreA (156 aa).

The stretch at 45–66 forms a coiled coil; it reads NAEYHSAKEKQSFIEGRIKELE.

Belongs to the GreA/GreB family.

Necessary for efficient RNA polymerase transcription elongation past template-encoded arresting sites. The arresting sites in DNA have the property of trapping a certain fraction of elongating RNA polymerases that pass through, resulting in locked ternary complexes. Cleavage of the nascent transcript by cleavage factors such as GreA or GreB allows the resumption of elongation from the new 3'terminus. GreA releases sequences of 2 to 3 nucleotides. The chain is Transcription elongation factor GreA from Jannaschia sp. (strain CCS1).